Consider the following 197-residue polypeptide: MADILTQLQTCLDQLATQFYATVAYLTTYHDHSPAIPPPSVPSAVPQLKKIPKNPPPAAPTSGTATNTPGAAGGPSGDTKDAAAGPSNAPQMQQQHQEQPPDAPPRPDSPNTFLMRQRELARDLIIKEQQIEYLISVLPGIKSSEAEQQERIKQLAEELRVVEEERSARRRELRRLGEKVDGLLGAVSRGTGISNSG.

Residues 37–112 form a disordered region; the sequence is PPPSVPSAVP…APPRPDSPNT (76 aa). Composition is skewed to low complexity over residues 60 to 70 and 90 to 100; these read PTSGTATNTPG and PQMQQQHQEQP. The stretch at 140-183 forms a coiled coil; that stretch reads GIKSSEAEQQERIKQLAEELRVVEEERSARRRELRRLGEKVDGL.

Belongs to the Mediator complex subunit 21 family. As to quaternary structure, component of the Mediator complex.

It is found in the nucleus. Component of the Mediator complex, a coactivator involved in the regulated transcription of nearly all RNA polymerase II-dependent genes. Mediator functions as a bridge to convey information from gene-specific regulatory proteins to the basal RNA polymerase II transcription machinery. Mediator is recruited to promoters by direct interactions with regulatory proteins and serves as a scaffold for the assembly of a functional preinitiation complex with RNA polymerase II and the general transcription factors. This Coccidioides immitis (strain RS) (Valley fever fungus) protein is Mediator of RNA polymerase II transcription subunit 21 (SRB7).